The following is a 216-amino-acid chain: MOB kinase activator-like 1 homolog C (216 aa).

Positions 78, 83, 160, and 165 each coordinate Zn(2+).

The protein belongs to the MOB1/phocein family.

The protein is MOB kinase activator-like 1 homolog C (mobC) of Dictyostelium discoideum (Social amoeba).